A 448-amino-acid polypeptide reads, in one-letter code: Phosphoglucosamine mutase (448 aa).

Ser100 functions as the Phosphoserine intermediate in the catalytic mechanism. Ser100, Asp240, Asp242, and Asp244 together coordinate Mg(2+). A Phosphoserine modification is found at Ser100.

This sequence belongs to the phosphohexose mutase family. Mg(2+) is required as a cofactor. In terms of processing, activated by phosphorylation.

The enzyme catalyses alpha-D-glucosamine 1-phosphate = D-glucosamine 6-phosphate. Its function is as follows. Catalyzes the conversion of glucosamine-6-phosphate to glucosamine-1-phosphate. The protein is Phosphoglucosamine mutase of Clostridium acetobutylicum (strain ATCC 824 / DSM 792 / JCM 1419 / IAM 19013 / LMG 5710 / NBRC 13948 / NRRL B-527 / VKM B-1787 / 2291 / W).